Here is a 975-residue protein sequence, read N- to C-terminus: NLR family member X1 (975 aa).

Residues 1 to 86 (MRWGHHLPRA…EAIQRHRRNL (86 aa)) constitute a mitochondrion transit peptide. A required for interaction with MAVS region spans residues 75–556 (ATEAIQRHRR…RALPLLFNLI (482 aa)). The NACHT domain occupies 160–483 (QTVVLYGTVG…LRFFLAPCVE (324 aa)). Residue 166 to 173 (GTVGTGKS) coordinates ATP. The tract at residues 556–974 (IKVVPRVFGR…ALLEQLGSSG (419 aa)) is required for the repression of MAVS-induced interferon signaling. Positions 667–694 (RQVLPPSELLDHLFFHYEFQNQRFSAEV) constitute an LRRNT domain. 8 LRR repeats span residues 695 to 718 (LSSL…VVAA), 724 to 747 (RHAL…TLLP), 749 to 777 (FLRA…LLHD), 778 to 801 (QCQI…VLME), 811 to 834 (HLSL…LDRN), 835 to 857 (RQLQ…ALAR), 858 to 877 (AARE…ELSS), and 878 to 899 (EGRQ…VVVS). The LRRCT domain occupies 906–970 (VSEYWSVILS…GEVRALLEQL (65 aa)).

It belongs to the NLRP family. Homohexamer. Interacts with MAVS. Interacts with TUFM. In terms of assembly, (Microbial infection) Interacts with influenza A virus protein PB1-F2. As to expression, ubiquitously expressed. Strongest expression in mammary gland, heart and muscle. Detected in HeLa, HEK293T, THP-1, HL-60, Raji and Jurkat cell lines (at protein level).

The protein localises to the mitochondrion outer membrane. In terms of biological role, participates in antiviral signaling. Acts as a negative regulator of MAVS-mediated antiviral responses, through the inhibition of the virus-induced RLH (RIG-like helicase)-MAVS interaction. Instead, promotes autophagy by interacting with TUFM and subsequently recruiting the autophagy-related proteins ATG5 and ATG12. Also regulates MAVS-dependent NLRP3 inflammasome activation to attenuate apoptosis. Has no inhibitory function on NF-kappa-B signaling pathway, but enhances NF-kappa-B and JUN N-terminal kinase dependent signaling through the production of reactive oxygen species. Regulates viral mediated-inflammation and energy metabolism in a sex-dependent manner. In females, prevents uncontrolled inflammation and energy metabolism and thus, may contribute to the sex differences observed in infectious and inflammatory diseases. This chain is NLR family member X1 (NLRX1), found in Homo sapiens (Human).